The chain runs to 709 residues: ATP-dependent zinc metalloprotease YME1 homolog (709 aa).

The tract at residues 152 to 182 (FTSDTSSTVSSTPSLNHSLQNSMPPSTPTPP) is disordered. Low complexity predominate over residues 153-165 (TSDTSSTVSSTPS). A helical membrane pass occupies residues 217-239 (IFKFIAGLSVASYFVLLGMSIFA). Residue 307–314 (GPPGTGKT) participates in ATP binding. H530 contributes to the Zn(2+) binding site. E531 is a catalytic residue. Zn(2+) is bound by residues H534 and D608.

The protein in the N-terminal section; belongs to the AAA ATPase family. This sequence in the C-terminal section; belongs to the peptidase M41 family. It depends on Zn(2+) as a cofactor.

It is found in the mitochondrion membrane. Functionally, putative ATP-dependent protease. The protein is ATP-dependent zinc metalloprotease YME1 homolog of Schizosaccharomyces pombe (strain 972 / ATCC 24843) (Fission yeast).